Reading from the N-terminus, the 427-residue chain is Peptidyl-prolyl cis-trans isomerase sig-7 (427 aa).

A PPIase cyclophilin-type domain is found at glutamate 6 to valine 161. A coiled-coil region spans residues aspartate 195–methionine 227. The RRM domain occupies asparagine 241 to serine 319. Residues glutamine 322–glutamate 334 show a composition bias toward polar residues. Positions glutamine 322 to arginine 427 are disordered. A compositionally biased stretch (basic residues) spans serine 351–lysine 370. The span at serine 384 to arginine 427 shows a compositional bias: basic and acidic residues.

The protein belongs to the cyclophilin-type PPIase family. PPIL4 subfamily. As to quaternary structure, interacts with ama-1, the catalytic subunit of the RNA polymerase II (RNA pol II) complex. Ubiquitous.

It is found in the nucleus. Its subcellular location is the nucleoplasm. The protein localises to the chromosome. The enzyme catalyses [protein]-peptidylproline (omega=180) = [protein]-peptidylproline (omega=0). Its function is as follows. Probable PPIase that accelerates the folding of proteins. It catalyzes the cis-trans isomerization of proline imidic peptide bonds in oligopeptides. Involved in RNA polymerase II (RNA pol II)-mediated transcription elongation, and in primary transcript splicing, including co-transcriptional trans-splicing, in association with the catalytic subunit of the RNA pol II complex ama-1. Also plays a role in the regulation of elongation-dependent phosphorylation of ama-1 to control transcription. Involved in the transcription of several genes during embryogenesis and in particular, of genes related to developmental processes such as gastrulation, and also regulates transcription in germ cells from embryogenesis to adulthood. The polypeptide is Peptidyl-prolyl cis-trans isomerase sig-7 (Caenorhabditis elegans).